Reading from the N-terminus, the 78-residue chain is U7-lycotoxin-Ls1f (78 aa).

The first 22 residues, 1-22, serve as a signal peptide directing secretion; that stretch reads MKLIIFTGLALLLIVSLIDVEA. A propeptide spanning residues 23–26 is cleaved from the precursor; it reads QNEG.

It belongs to the neurotoxin 19 (CSTX) family. 07 (U7-Lctx) subfamily. Post-translationally, contains 4 disulfide bonds. Expressed by the venom gland.

The protein localises to the secreted. The sequence is that of U7-lycotoxin-Ls1f from Lycosa singoriensis (Wolf spider).